A 203-amino-acid chain; its full sequence is Holliday junction branch migration complex subunit RuvA (203 aa).

A domain I region spans residues 1–64 (MIGRLRGIIL…EDAQLLYGFN (64 aa)). A domain II region spans residues 65 to 142 (NKQERTLFKE…KGLHGDLFTP (78 aa)). The flexible linker stretch occupies residues 143–154 (AVDLVLTSPASP). Residues 155–203 (TSEDAEQEAVAALVALGYKPQEASRMVSKIARPDASSETLIRDALRAAL) are domain III.

This sequence belongs to the RuvA family. Homotetramer. Forms an RuvA(8)-RuvB(12)-Holliday junction (HJ) complex. HJ DNA is sandwiched between 2 RuvA tetramers; dsDNA enters through RuvA and exits via RuvB. An RuvB hexamer assembles on each DNA strand where it exits the tetramer. Each RuvB hexamer is contacted by two RuvA subunits (via domain III) on 2 adjacent RuvB subunits; this complex drives branch migration. In the full resolvosome a probable DNA-RuvA(4)-RuvB(12)-RuvC(2) complex forms which resolves the HJ.

It localises to the cytoplasm. The RuvA-RuvB-RuvC complex processes Holliday junction (HJ) DNA during genetic recombination and DNA repair, while the RuvA-RuvB complex plays an important role in the rescue of blocked DNA replication forks via replication fork reversal (RFR). RuvA specifically binds to HJ cruciform DNA, conferring on it an open structure. The RuvB hexamer acts as an ATP-dependent pump, pulling dsDNA into and through the RuvAB complex. HJ branch migration allows RuvC to scan DNA until it finds its consensus sequence, where it cleaves and resolves the cruciform DNA. In Salmonella agona (strain SL483), this protein is Holliday junction branch migration complex subunit RuvA.